We begin with the raw amino-acid sequence, 291 residues long: MVRYPAVAGSFYPGDETLIEMLEKFFRDLGEHGSERKITAGVVPHAGYVFSGYTASRTFKAIYEDGLPETFVILGPNHTGIGSPIAVYPSGSWLTPLGEIEVDSEMAKTIAKLSGIADLDELAHKYEHSIEVQLPFIQYLAEKARTDVRIVPITLGIQDEEVVEDLGKAIYEAANELDRDVVIIASTDFMHYGPAYGYVPFRARADELPHRVKEWDFRVIQKILDFDVKGMFGELRKMDHTMCGPGGVGTAIVYSRLAGALEAELLHYTTSFEVSRSTDAIVGYASIVFRK.

This sequence belongs to the MEMO1 family.

This is MEMO1 family protein TON_0132 from Thermococcus onnurineus (strain NA1).